A 599-amino-acid chain; its full sequence is Retrotransposon Gag-like protein 5 (599 aa).

Disordered regions lie at residues 77-97 (DPTP…CWPP), 116-139 (DYTN…ELHS), and 377-450 (FPQE…EEDE). A compositionally biased stretch (acidic residues) spans 78-90 (PTPEEEEEEEEEV). 2 stretches are compositionally biased toward acidic residues: residues 393-432 (DEME…EDKE) and 439-450 (DSDENKYEEEDE).

This chain is Retrotransposon Gag-like protein 5, found in Mus musculus (Mouse).